A 295-amino-acid polypeptide reads, in one-letter code: UDP-N-acetylenolpyruvoylglucosamine reductase (295 aa).

In terms of domain architecture, FAD-binding PCMH-type spans 24–188; that stretch reads KVGGDAEIFF…LKAVFKVNKG (165 aa). Residue arginine 168 is part of the active site. Serine 217 functions as the Proton donor in the catalytic mechanism. Residue glutamate 287 is part of the active site.

It belongs to the MurB family. Requires FAD as cofactor.

It is found in the cytoplasm. It catalyses the reaction UDP-N-acetyl-alpha-D-muramate + NADP(+) = UDP-N-acetyl-3-O-(1-carboxyvinyl)-alpha-D-glucosamine + NADPH + H(+). The protein operates within cell wall biogenesis; peptidoglycan biosynthesis. Its function is as follows. Cell wall formation. The polypeptide is UDP-N-acetylenolpyruvoylglucosamine reductase (Rickettsia akari (strain Hartford)).